Reading from the N-terminus, the 326-residue chain is Cytosolic sulfotransferase 12 (326 aa).

75–80 (KSGTTW) provides a ligand contact to 3'-phosphoadenylyl sulfate. Residue H140 is the Proton acceptor of the active site. 3'-phosphoadenylyl sulfate is bound by residues R162, S170, Y228, and 290-292 (RKG).

The protein belongs to the sulfotransferase 1 family. In terms of assembly, dimer. As to expression, expressed in the aerial parts of seedlings, in roots, leaves and flowers. Not detected in stems and siliques.

It is found in the cytoplasm. Its function is as follows. Sulfotransferase that utilizes 3'-phospho-5'-adenylyl sulfate (PAPS) as sulfonate donor to catalyze the stereospecific sulfate conjugation of 24-epibrassinosteroids. Preferred substrates are 24-epicathasterone and 6-deoxo-24-epicathasterone. Low activity with 22-deoxy-24-epiteasterone. No activity with 24-epimers catasterone and brassinolide. Sulfonates salicylic acid. May be involved in detoxification. Enhances plant response to pathogen infection and contributes to long distance signaling in systemic acquired resistance (SAR). The chain is Cytosolic sulfotransferase 12 (SOT12) from Arabidopsis thaliana (Mouse-ear cress).